Reading from the N-terminus, the 548-residue chain is Membrane protein insertase YidC (548 aa).

The chain crosses the membrane as a helical span at residues 6–26 (NLLIIALLFVSFMIWQAWEQD). The interval 28–52 (NPQPQQQTTQTTTTAAGSAADQGVP) is disordered. Over residues 29 to 41 (PQPQQQTTQTTTT) the composition is skewed to low complexity. Helical transmembrane passes span 345–365 (KFIH…TFIV), 420–440 (LGGC…YYML), 458–478 (LSAQ…MFFI), and 499–519 (PVIF…YYIV).

This sequence belongs to the OXA1/ALB3/YidC family. Type 1 subfamily. As to quaternary structure, interacts with the Sec translocase complex via SecD. Specifically interacts with transmembrane segments of nascent integral membrane proteins during membrane integration.

It is found in the cell inner membrane. Its function is as follows. Required for the insertion and/or proper folding and/or complex formation of integral membrane proteins into the membrane. Involved in integration of membrane proteins that insert both dependently and independently of the Sec translocase complex, as well as at least some lipoproteins. Aids folding of multispanning membrane proteins. This Klebsiella pneumoniae (strain 342) protein is Membrane protein insertase YidC.